We begin with the raw amino-acid sequence, 316 residues long: MSKQFGKVGVLYGGRSAEREVSLMSGKGVHEALLSAGVDAHLFDTGERSLADLAAAGFERVFIALHGRYGEDGTLQGALELLGIPYTGSGPLASSLSMDKIMTKRVWLQHGLPTPAFEVLGGSTELRLVPDRLGLPLILKPPHEGSTVGITKVAGYSDMKAAYELAARFDAEVLAEQFITGRELTVAVLGSGAAARALPVIEIVAPGGNYDYEHKYFSDDTQYFCPADLPADVAADVAAVAERAYAALGCEGWGRVDFILDRENRPWLLEMNTSPGMTGHSLVPMAARAVGMSYADLCVAILAEAACKVRSPARQD.

Residues 104 to 303 (KRVWLQHGLP…YADLCVAILA (200 aa)) enclose the ATP-grasp domain. Position 130–185 (130–185 (PDRLGLPLILKPPHEGSTVGITKVAGYSDMKAAYELAARFDAEVLAEQFITGRELT)) interacts with ATP. Mg(2+)-binding residues include Asp-257, Glu-270, and Asn-272.

This sequence belongs to the D-alanine--D-alanine ligase family. Mg(2+) serves as cofactor. The cofactor is Mn(2+).

It is found in the cytoplasm. The enzyme catalyses 2 D-alanine + ATP = D-alanyl-D-alanine + ADP + phosphate + H(+). It participates in cell wall biogenesis; peptidoglycan biosynthesis. Functionally, cell wall formation. In Bordetella bronchiseptica (strain ATCC BAA-588 / NCTC 13252 / RB50) (Alcaligenes bronchisepticus), this protein is D-alanine--D-alanine ligase.